A 260-amino-acid polypeptide reads, in one-letter code: HTH-type transcriptional repressor NanR (260 aa).

A disordered region spans residues 1–22; the sequence is MNAFDSQAEDSPTSLGRSLRRR. The HTH gntR-type domain maps to 27-95; it reads KKLSEMVEEE…NGERARVSRP (69 aa). Residues 55–74 constitute a DNA-binding region (H-T-H motif); it reads ERELMAFFNVGRPSVREALA.

Belongs to the NanR family.

Transcriptional repressor that controls expression of the genes required for the catabolism of sialic acids. The sequence is that of HTH-type transcriptional repressor NanR from Salmonella newport (strain SL254).